Here is a 203-residue protein sequence, read N- to C-terminus: Somatotropin (203 aa).

A signal peptide spans 1-17; it reads MNRVILLLSVMCVGVSS. Position 18 is a pyrrolidone carboxylic acid (glutamine 18). 2 cysteine pairs are disulfide-bonded: cysteine 68/cysteine 176 and cysteine 193/cysteine 201.

It belongs to the somatotropin/prolactin family.

The protein localises to the secreted. In terms of biological role, growth hormone plays an important role in growth control and is involved in the regulation of several anabolic processes. Implicated as an osmoregulatory substance important for seawater adaptation. This chain is Somatotropin (gh), found in Verasper variegatus (Spotted flounder).